Consider the following 779-residue polypeptide: Aconitate hydratase, mitochondrial (779 aa).

Residues 1 to 28 constitute a mitochondrion transit peptide; that stretch reads MIAMDRIARIPIARWTSRAFRVSAAARQ. Substrate-binding positions include Gln97 and 190–192; that span reads DSH. Residues Cys383, Cys446, and Cys449 each contribute to the [4Fe-4S] cluster site. Substrate is bound by residues Arg472, Arg477, Arg605, and 668-669; that span reads SR.

Belongs to the aconitase/IPM isomerase family. In terms of assembly, monomer. It depends on [4Fe-4S] cluster as a cofactor.

The protein localises to the mitochondrion. The enzyme catalyses citrate = D-threo-isocitrate. It functions in the pathway carbohydrate metabolism; tricarboxylic acid cycle; isocitrate from oxaloacetate: step 2/2. Functionally, catalyzes the isomerization of citrate to isocitrate via cis-aconitate. The protein is Aconitate hydratase, mitochondrial of Gracilaria gracilis (Red alga).